We begin with the raw amino-acid sequence, 346 residues long: MEFSAKQIAEYIQGIIVGDENATVHTFAKIEEGVPGAISFLSNPKYTHYIYDTQSTIVLVNKDFVPEQEVKATLIKVDNAYESLAKLLTLYEMSKPKKTGIDPLAYVAPTAKLGKDVYIAPFACVGDGAEIGDNTSLHPHATVGSHAKVGNNCTLYPHATIYHDCLVGNHCTLHAGCVIGADGFGFAPSPEGYEKIPQIGIAIIEDNVEIGANTCVDRATMGATIVHKGVKLDNLIQIAHNVEVGSHTVMASQVGIAGSTKVGEWCMFGGQVGLAGHIKIGDKVGIGAQAGVPGNVKSNEQILGTPAIDAKNFMKSSAVYKKLPEIYTTLNAMQKEIEELKKQLNK.

The Proton acceptor role is filled by His240.

This sequence belongs to the transferase hexapeptide repeat family. LpxD subfamily. In terms of assembly, homotrimer.

It catalyses the reaction a UDP-3-O-[(3R)-3-hydroxyacyl]-alpha-D-glucosamine + a (3R)-hydroxyacyl-[ACP] = a UDP-2-N,3-O-bis[(3R)-3-hydroxyacyl]-alpha-D-glucosamine + holo-[ACP] + H(+). It participates in bacterial outer membrane biogenesis; LPS lipid A biosynthesis. Functionally, catalyzes the N-acylation of UDP-3-O-acylglucosamine using 3-hydroxyacyl-ACP as the acyl donor. Is involved in the biosynthesis of lipid A, a phosphorylated glycolipid that anchors the lipopolysaccharide to the outer membrane of the cell. This is UDP-3-O-acylglucosamine N-acyltransferase from Phocaeicola vulgatus (strain ATCC 8482 / DSM 1447 / JCM 5826 / CCUG 4940 / NBRC 14291 / NCTC 11154) (Bacteroides vulgatus).